Reading from the N-terminus, the 46-residue chain is Peroxidase 1 (46 aa).

Belongs to the peroxidase family. Classical plant (class III) peroxidase subfamily. The cofactor is heme b. Ca(2+) is required as a cofactor.

It localises to the secreted. The enzyme catalyses 2 a phenolic donor + H2O2 = 2 a phenolic radical donor + 2 H2O. Functionally, removal of H(2)O(2), oxidation of toxic reductants, biosynthesis and degradation of lignin, suberization, auxin catabolism, response to environmental stresses such as wounding, pathogen attack and oxidative stress. These functions might be dependent on each isozyme/isoform in each plant tissue. In Catharanthus roseus (Madagascar periwinkle), this protein is Peroxidase 1.